The following is a 361-amino-acid chain: Porphobilinogen deaminase (361 aa).

An N-acetylserine modification is found at S2. At S69 the chain carries Phosphoserine. N6-acetyllysine is present on K74. S147 bears the Phosphoserine mark. C261 carries the S-(dipyrrolylmethanemethyl)cysteine modification.

This sequence belongs to the HMBS family. Monomer. Dipyrromethane is required as a cofactor.

It localises to the cytoplasm. The protein resides in the cytosol. The enzyme catalyses 4 porphobilinogen + H2O = hydroxymethylbilane + 4 NH4(+). Its pathway is porphyrin-containing compound metabolism; protoporphyrin-IX biosynthesis; coproporphyrinogen-III from 5-aminolevulinate: step 2/4. Functionally, as part of the heme biosynthetic pathway, catalyzes the sequential polymerization of four molecules of porphobilinogen to form hydroxymethylbilane, also known as preuroporphyrinogen. Catalysis begins with the assembly of the dipyrromethane cofactor by the apoenzyme from two molecules of porphobilinogen or from preuroporphyrinogen. The covalently linked cofactor acts as a primer, around which the tetrapyrrole product is assembled. In the last step of catalysis, the product, preuroporphyrinogen, is released, leaving the cofactor bound to the holodeaminase intact. The protein is Porphobilinogen deaminase (Hmbs) of Mus musculus (Mouse).